The following is a 166-amino-acid chain: Alanine racemase (166 aa).

Tyr-62 serves as the catalytic Proton acceptor; specific for L-alanine. Met-110 contacts substrate.

This sequence belongs to the alanine racemase family. It depends on pyridoxal 5'-phosphate as a cofactor.

The enzyme catalyses L-alanine = D-alanine. It functions in the pathway amino-acid biosynthesis; D-alanine biosynthesis; D-alanine from L-alanine: step 1/1. Catalyzes the interconversion of L-alanine and D-alanine. May also act on other amino acids. The polypeptide is Alanine racemase (alr) (Piscirickettsia salmonis).